Consider the following 80-residue polypeptide: Cytochrome c oxidase subunit 7A1, mitochondrial (80 aa).

The N-terminal 21 residues, 1–21 (MLAPRVSQALIRSFSSTARNR), are a transit peptide targeting the mitochondrion. At 22 to 46 (LKNRVPEKQKLFQEDNGIPVYLKGG) the chain is on the mitochondrial matrix side. A helical membrane pass occupies residues 47–75 (VVDHILYRVTMGLCLGGTAYGVYCLAWAS). Residues 76–80 (FPRNK) lie on the Mitochondrial intermembrane side of the membrane.

This sequence belongs to the cytochrome c oxidase VIIa family. As to quaternary structure, component of the complex IV (CIV, cytochrome c oxidase), a multisubunit enzyme composed of 14 subunits. The complex is composed of a catalytic core of 3 subunits MT-CO1, MT-CO2 and MT-CO3, encoded in the mitochondrial DNA, and 11 supernumerary subunits COX4I1 (or COX4I2), COX5A, COX5B, COX6A2 (or COX6A1), COX6B1 (or COX6B2), COX6C, COX7A1 (or COX7A2), COX7B, COX7C, COX8B and NDUFA4, which are encoded in the nuclear genome. The complex exists as a monomer or a dimer and forms supercomplexes (SCs) in the inner mitochondrial membrane with NADH-ubiquinone oxidoreductase (complex I, CI) and ubiquinol-cytochrome c oxidoreductase (cytochrome b-c1 complex, complex III, CIII), resulting in different assemblies (supercomplex SCI(1)III(2)IV(1) and megacomplex MCI(2)III(2)IV(2)).

The protein resides in the mitochondrion inner membrane. Its pathway is energy metabolism; oxidative phosphorylation. In terms of biological role, component of the mitochondrial respiratory complex IV (CIV, also named cytochrome c oxidase complex), the last enzyme in the mitochondrial electron transport chain which drives oxidative phosphorylation. The CIV complex is the component of the respiratory chain that catalyzes the reduction of oxygen to water. Acts as an assembly factor that specifically drives the homodimerization of CIV complexes, mediating the formation of mitochondrial respiratory supercomplexes (respirasomes) containing two CIV: supercomplxes with two molecules of CIV show improved activity. Despite being highly expressed in brown adipose tissue, not required for thermogenesis. The chain is Cytochrome c oxidase subunit 7A1, mitochondrial (COX7A1) from Saimiri sciureus (Common squirrel monkey).